A 354-amino-acid polypeptide reads, in one-letter code: Ferredoxin--NADP reductase, chloroplastic (354 aa).

The N-terminal 35 residues, 1–35 (MASLRKPSNHADRACSRRLRVATRVAGRRMCRPVA), are a transit peptide targeting the chloroplast. Positions 69–198 (KAPFKAKVRS…TGPTGKVLLL (130 aa)) constitute an FAD-binding FR-type domain. N6,N6,N6-trimethyllysine is present on residues Lys118 and Lys124. FAD contacts are provided by residues 130–133 (RLYS), 151–153 (CVR), and Tyr157. Positions 133 and 153 each coordinate NADP(+). N6,N6-dimethyllysine is present on Lys170. FAD-binding positions include 172–174 (LCS) and Thr213. Residues Thr213, 245–246 (VG), 275–276 (SR), Lys285, 313–314 (GL), and Glu352 contribute to the NADP(+) site.

This sequence belongs to the ferredoxin--NADP reductase type 1 family. The cofactor is FAD.

It localises to the plastid. The protein localises to the chloroplast stroma. Its subcellular location is the chloroplast thylakoid membrane. The catalysed reaction is 2 reduced [2Fe-2S]-[ferredoxin] + NADP(+) + H(+) = 2 oxidized [2Fe-2S]-[ferredoxin] + NADPH. It participates in energy metabolism; photosynthesis. May play a key role in regulating the relative amounts of cyclic and non-cyclic electron flow to meet the demands of the plant for ATP and reducing power. The chain is Ferredoxin--NADP reductase, chloroplastic (PETH) from Chlamydomonas reinhardtii (Chlamydomonas smithii).